The chain runs to 388 residues: Probable serine/threonine-protein kinase PBL20 (388 aa).

A lipid anchor (S-palmitoyl cysteine) is attached at Cys3. The Protein kinase domain occupies 91–372 (FSRKLKIGEG…FVVESLTNII (282 aa)). ATP is bound by residues 97-105 (IGEGGFGSV) and Lys128. Asp221 functions as the Proton acceptor in the catalytic mechanism.

This sequence belongs to the protein kinase superfamily. Ser/Thr protein kinase family.

The protein localises to the cell membrane. The catalysed reaction is L-seryl-[protein] + ATP = O-phospho-L-seryl-[protein] + ADP + H(+). It carries out the reaction L-threonyl-[protein] + ATP = O-phospho-L-threonyl-[protein] + ADP + H(+). Functionally, may be involved in plant defense signaling. The polypeptide is Probable serine/threonine-protein kinase PBL20 (Arabidopsis thaliana (Mouse-ear cress)).